Reading from the N-terminus, the 153-residue chain is FAD synthase (153 aa).

ATP contacts are provided by residues 9–10 (TF), 14–17 (HPGH), Asp-97, and Tyr-124.

The protein belongs to the archaeal FAD synthase family. As to quaternary structure, homodimer. A divalent metal cation is required as a cofactor.

The catalysed reaction is FMN + ATP + H(+) = FAD + diphosphate. It participates in cofactor biosynthesis; FAD biosynthesis; FAD from FMN: step 1/1. Functionally, catalyzes the transfer of the AMP portion of ATP to flavin mononucleotide (FMN) to produce flavin adenine dinucleotide (FAD) coenzyme. This chain is FAD synthase, found in Methanobrevibacter smithii (strain ATCC 35061 / DSM 861 / OCM 144 / PS).